A 262-amino-acid chain; its full sequence is Homeobox protein vent1 (262 aa).

2 stretches are compositionally biased toward basic and acidic residues: residues 16–26 (REEAPDGKDSV) and 44–55 (YAKEIPRRKDGQ). The segment at 16-129 (REEAPDGKDS…KSPKSDLQRR (114 aa)) is disordered. Residues 58-79 (GEITSFQCSSEEARNRQFSNPS) show a composition bias toward polar residues. Residues 114 to 128 (DTEHRSKSPKSDLQR) show a composition bias toward basic and acidic residues. The segment at residues 127-186 (QRRLRTAFTPQQITRLEQAFNKQRYLGASERKKLATSLQLSEIQVKTWFQNRRMKLKRQI) is a DNA-binding region (homeobox).

Its subcellular location is the nucleus. Functionally, transcriptional repressor. Cooperates with vent2 in a ventral signaling pathway downstream of bmp4, which antagonizes the Spemann organizer and dorsal mesoderm formation, and leads to ventral mesoderm formation. Acts downstream of bmp4 to repress transcription of foxa4-B/XFD-1'. Binds to DNA with preference for the target sequence 5'-CTATT[T/C]G-3'. Also binds 5'-TGCATTTTG-3' at a lower frequency, and occasionally 5'-TTGATC-3'. Binds to the homeobox 2 (HBX2) repressor element in the promoter of the myf5 gene. Cooperates with vent2 to repress myf5 expression in the ventral domain. This Xenopus tropicalis (Western clawed frog) protein is Homeobox protein vent1.